Reading from the N-terminus, the 173-residue chain is ATP-dependent protease subunit HslV (173 aa).

Residue threonine 2 is part of the active site. 3 residues coordinate Na(+): glycine 158, aspartate 161, and serine 164.

Belongs to the peptidase T1B family. HslV subfamily. As to quaternary structure, a double ring-shaped homohexamer of HslV is capped on each side by a ring-shaped HslU homohexamer. The assembly of the HslU/HslV complex is dependent on binding of ATP.

It localises to the cytoplasm. It catalyses the reaction ATP-dependent cleavage of peptide bonds with broad specificity.. Allosterically activated by HslU binding. Protease subunit of a proteasome-like degradation complex believed to be a general protein degrading machinery. This Mannheimia haemolytica (Pasteurella haemolytica) protein is ATP-dependent protease subunit HslV.